A 334-amino-acid polypeptide reads, in one-letter code: Probable aminoacyl tRNA synthase complex-interacting multifunctional protein 2 (334 aa).

Positions 280–327 constitute a GST C-terminal domain; it reads LDKRLQKQQYFGGSQMSVADVGVYSSLIRMPAVTEKDLTPALVAWRKR.

Component of the aminoacyl-tRNA synthase complex which is comprised of a bifunctional glutamyl-prolyl-tRNA synthase, the monospecific isoleucyl, leucyl, glutaminyl, methionyl, lysyl, arginyl and aspartyl-tRNA synthases, and three auxiliary proteins.

It is found in the cytoplasm. The protein resides in the cytosol. The protein localises to the nucleus. Required for assembly and stability of the aminoacyl-tRNA synthase complex. In Drosophila melanogaster (Fruit fly), this protein is Probable aminoacyl tRNA synthase complex-interacting multifunctional protein 2.